A 621-amino-acid polypeptide reads, in one-letter code: Chaperone protein HscA homolog (621 aa).

Belongs to the heat shock protein 70 family.

Functionally, chaperone involved in the maturation of iron-sulfur cluster-containing proteins. Has a low intrinsic ATPase activity which is markedly stimulated by HscB. In Cupriavidus taiwanensis (strain DSM 17343 / BCRC 17206 / CCUG 44338 / CIP 107171 / LMG 19424 / R1) (Ralstonia taiwanensis (strain LMG 19424)), this protein is Chaperone protein HscA homolog.